Here is a 449-residue protein sequence, read N- to C-terminus: Phosphoglucosamine mutase (449 aa).

The active-site Phosphoserine intermediate is the Ser105. Residues Ser105, Asp242, Asp244, and Asp246 each contribute to the Mg(2+) site. Phosphoserine is present on Ser105.

Belongs to the phosphohexose mutase family. Mg(2+) is required as a cofactor. Post-translationally, activated by phosphorylation.

It carries out the reaction alpha-D-glucosamine 1-phosphate = D-glucosamine 6-phosphate. Catalyzes the conversion of glucosamine-6-phosphate to glucosamine-1-phosphate. The chain is Phosphoglucosamine mutase from Clavibacter sepedonicus (Clavibacter michiganensis subsp. sepedonicus).